The primary structure comprises 149 residues: Large ribosomal subunit protein bL9 (149 aa).

This sequence belongs to the bacterial ribosomal protein bL9 family.

Functionally, binds to the 23S rRNA. The protein is Large ribosomal subunit protein bL9 of Anaeromyxobacter dehalogenans (strain 2CP-1 / ATCC BAA-258).